We begin with the raw amino-acid sequence, 369 residues long: Anhydro-N-acetylmuramic acid kinase (369 aa).

Gly-12–Asp-19 lines the ATP pocket.

Belongs to the anhydro-N-acetylmuramic acid kinase family.

It carries out the reaction 1,6-anhydro-N-acetyl-beta-muramate + ATP + H2O = N-acetyl-D-muramate 6-phosphate + ADP + H(+). It participates in amino-sugar metabolism; 1,6-anhydro-N-acetylmuramate degradation. The protein operates within cell wall biogenesis; peptidoglycan recycling. Functionally, catalyzes the specific phosphorylation of 1,6-anhydro-N-acetylmuramic acid (anhMurNAc) with the simultaneous cleavage of the 1,6-anhydro ring, generating MurNAc-6-P. Is required for the utilization of anhMurNAc either imported from the medium or derived from its own cell wall murein, and thus plays a role in cell wall recycling. The protein is Anhydro-N-acetylmuramic acid kinase of Shewanella pealeana (strain ATCC 700345 / ANG-SQ1).